The chain runs to 411 residues: Lissencephaly-1 homolog (411 aa).

The LisH domain maps to 7–39 (QREELNKAIADYLASNGFMEALESFKKETDMPG). The stretch at 54 to 80 (TSVIRLQKKVMDLEGRLAEAEKEYISG) forms a coiled coil. Positions 77 to 89 (YISGTPSREKRSP) are enriched in basic and acidic residues. The interval 77-96 (YISGTPSREKRSPTEWIPRP) is disordered. WD repeat units follow at residues 104–145 (GHRA…RTIK), 146–187 (GHTD…RTMH), 188–227 (GHDH…CVRT), 230–269 (GHRD…CKLE), 272–334 (EHDH…ALFT), 337–376 (GHDN…CCKT), and 379–411 (AHSH…WECR).

Belongs to the WD repeat LIS1/nudF family.

Its subcellular location is the cytoplasm. The protein localises to the cytoskeleton. The protein resides in the microtubule organizing center. It is found in the centrosome. Its function is as follows. Positively regulates the activity of the minus-end directed microtubule motor protein dynein. May enhance dynein-mediated microtubule sliding by targeting dynein to the microtubule plus end. Required for several dynein- and microtubule-dependent processes. The protein is Lissencephaly-1 homolog of Ixodes scapularis (Black-legged tick).